Consider the following 88-residue polypeptide: Apolipoprotein C-I (88 aa).

Residues 1–26 (MRLLLSLPVLLVALSVVLERPAPAQA) form the signal peptide.

This sequence belongs to the apolipoprotein C1 family.

It localises to the secreted. Its function is as follows. Inhibitor of lipoprotein binding to the low density lipoprotein (LDL) receptor, LDL receptor-related protein, and very low density lipoprotein (VLDL) receptor. Associates with high density lipoproteins (HDL) and the triacylglycerol-rich lipoproteins in the plasma and makes up about 10% of the protein of the VLDL and 2% of that of HDL. Appears to interfere directly with fatty acid uptake and is also the major plasma inhibitor of cholesteryl ester transfer protein (CETP). Binds free fatty acids and reduces their intracellular esterification. Modulates the interaction of APOE with beta-migrating VLDL and inhibits binding of beta-VLDL to the LDL receptor-related protein. This Tupaia glis (Common tree shrew) protein is Apolipoprotein C-I (APOC1).